A 311-amino-acid polypeptide reads, in one-letter code: Malate dehydrogenase (311 aa).

Position 10 to 15 (10 to 15) interacts with NAD(+); it reads GAGHTG. Positions 85 and 91 each coordinate substrate. NAD(+) is bound by residues Asn-98 and 121 to 123; that span reads LTN. Positions 123 and 154 each coordinate substrate. Residue His-178 is the Proton acceptor of the active site.

Belongs to the LDH/MDH superfamily. MDH type 3 family.

It catalyses the reaction (S)-malate + NAD(+) = oxaloacetate + NADH + H(+). Its function is as follows. Catalyzes the reversible oxidation of malate to oxaloacetate. The protein is Malate dehydrogenase of Staphylococcus carnosus (strain TM300).